The chain runs to 601 residues: Glutathione-regulated potassium-efflux system protein KefB (601 aa).

13 helical membrane-spanning segments follow: residues 4 to 24, 29 to 49, 55 to 75, 87 to 107, 115 to 135, 152 to 172, 177 to 197, 207 to 227, 230 to 250, 268 to 288, 291 to 311, 324 to 344, and 356 to 376; these read SDFL…VPLA, IGAV…GLGF, EILH…GLEL, IFGV…GLLM, AAVV…LQLM, VLLF…LLAG, HFDW…LIGG, FIAA…LVLG, LFMD…GVLL, GLLL…GVLY, LLWV…VLYL, MQFA…FSTA, and ALLL…MKLV. An RCK N-terminal domain is found at 400-519; it reads KPQVIVVGFG…AGVTQFSRET (120 aa).

This sequence belongs to the monovalent cation:proton antiporter 2 (CPA2) transporter (TC 2.A.37) family. KefB subfamily. Interacts with the regulatory subunit KefG.

It localises to the cell inner membrane. Pore-forming subunit of a potassium efflux system that confers protection against electrophiles. Catalyzes K(+)/H(+) antiport. The protein is Glutathione-regulated potassium-efflux system protein KefB of Escherichia coli O139:H28 (strain E24377A / ETEC).